Here is a 454-residue protein sequence, read N- to C-terminus: UDP-glycosyltransferase 79A2 (454 aa).

Residues serine 269, 330–331, 348–356, and 370–373 contribute to the UDP-alpha-D-glucose site; these read WV, HAGYGSVIE, and KVDQ.

This sequence belongs to the UDP-glycosyltransferase family.

In terms of biological role, may glycosylate diterpenes or flavonols in leaves. This is UDP-glycosyltransferase 79A2 from Stevia rebaudiana (Stevia).